The primary structure comprises 553 residues: Methionine--tRNA ligase (553 aa).

A 'HIGH' region motif is present at residues 12–22 (PYANSQLHLGH). Residues cysteine 144, cysteine 147, cysteine 157, and cysteine 160 each coordinate Zn(2+). The 'KMSKS' region signature appears at 332–336 (KFSKS). Lysine 335 serves as a coordination point for ATP.

It belongs to the class-I aminoacyl-tRNA synthetase family. MetG type 1 subfamily. In terms of assembly, monomer. Zn(2+) is required as a cofactor.

The protein localises to the cytoplasm. The enzyme catalyses tRNA(Met) + L-methionine + ATP = L-methionyl-tRNA(Met) + AMP + diphosphate. Is required not only for elongation of protein synthesis but also for the initiation of all mRNA translation through initiator tRNA(fMet) aminoacylation. This is Methionine--tRNA ligase from Dehalococcoides mccartyi (strain ATCC BAA-2266 / KCTC 15142 / 195) (Dehalococcoides ethenogenes (strain 195)).